The primary structure comprises 819 residues: Protein kinase C-binding protein NELL2 (819 aa).

The signal sequence occupies residues 1–24 (MHAMESRVLLRTFCVILGLEAVWG). Residues Asn-56, Asn-228, Asn-296, and Asn-301 are each glycosylated (N-linked (GlcNAc...) asparagine). Residues 58–231 (TKAFLFQDSP…AQCPDLNRTC (174 aa)) enclose the Laminin G-like domain. Residues 275–334 (RTCTMKGTTYREFESWTDGCKNCTCLNGTIQCETLVCPAPDCPAKSAPAYVDGKCCKECK) form the VWFC 1 domain. Residues 400-442 (GYDFCSEKHTCMENSVCRNLNDRAVCSCRDGFRALREDNAYCE) form the EGF-like 1 domain. Intrachain disulfides connect Cys-404-Cys-416, Cys-410-Cys-425, and Cys-427-Cys-441. 3 residues coordinate Ca(2+): Asp-443, Ile-444, and Glu-446. An EGF-like 2; calcium-binding domain is found at 443–484 (DIDECAEGRHYCRENTMCVNTPGSFLCICQTGYIRIDDYSCT). Intrachain disulfides connect Cys-447-Cys-460, Cys-454-Cys-469, Cys-471-Cys-483, Cys-489-Cys-502, Cys-496-Cys-511, Cys-513-Cys-524, Cys-528-Cys-538, Cys-532-Cys-544, and Cys-546-Cys-555. Ca(2+) is bound by residues Asn-462, Thr-463, and Ser-466. An EGF-like 3; calcium-binding domain is found at 485-525 (EHDECLTNQHNCDENALCFNTVGGHNCVCKPGYTGNGTTCK). Residue Asn-520 is glycosylated (N-linked (GlcNAc...) asparagine). The EGF-like 4 domain occupies 526-556 (AFCKDGCRNGGACIAANVCACPQGFTGPSCE). Thr-551 carries O-linked (GlcNAc...) threonine glycosylation. Residues Asp-558, Ile-559, and Glu-561 each coordinate Ca(2+). Residues 558 to 604 (DIDECSEGFVQCDSRANCINLPGWYHCECRDGYHDNGMFAPGGESCE) enclose the EGF-like 5; calcium-binding domain. Intrachain disulfides connect Cys-562/Cys-575, Cys-569/Cys-584, and Cys-586/Cys-603. Residues Asn-577, Leu-578, and Trp-581 each contribute to the Ca(2+) site. Ca(2+) is bound by residues Asp-605, Ile-606, and Glu-608. Residues 605–640 (DIDECGTGRHSCANDTICFNLDGGYDCRCPHGKNCT) enclose the EGF-like 6; calcium-binding domain. 3 disulfide bridges follow: Cys-609–Cys-622, Cys-616–Cys-631, and Cys-633–Cys-639. An N-linked (GlcNAc...) asparagine glycan is attached at Asn-618. Residues Asn-624, Leu-625, and Gly-628 each coordinate Ca(2+). N-linked (GlcNAc...) asparagine glycosylation is present at Asn-638. 2 consecutive VWFC domains span residues 641 to 696 (GDCV…PECD) and 701 to 759 (SQCL…PRCV).

As to quaternary structure, homotrimer. Binds to PRKCB. Interacts with NICOL1; this interaction triggers epididymal differentiation. In terms of assembly, binds to PRKCB. In terms of tissue distribution, widely expressed. Expressed in cortical astrocytes but not in neuron. As to expression, widely expressed in brain. High expression is observed in telencephalic and diencephalic glutamatergic neurons, while no expression is found in GABAergic and GNRH neurons.

It is found in the secreted. The protein resides in the cytoplasm. Plays multiple roles In neural tissues, regulates neuronal proliferation, survival, differentiation, polarization, as well as axon guidance and synaptic functions. Plays an important role in axon development during neuronal differentiation through the MAPK intracellular signaling pathway. Via binding to its receptor ROBO3, plays a role in axon guidance, functioning as a repulsive axon guidance cue that contributes to commissural axon guidance to the midline. Required for neuron survival through the modulation of MAPK signaling pathways too. Involved in the regulation of hypothalamic GNRH secretion and the control of puberty. Its function is as follows. Epididymal-secreted protein that signals through a ROS1-pathway to regulate the epididymal initial segment (IS) maturation, sperm maturation and male fertility. In terms of biological role, acts as an endogenous inhibitor of PRKCB in glia. The polypeptide is Protein kinase C-binding protein NELL2 (Nell2) (Rattus norvegicus (Rat)).